The chain runs to 135 residues: Mini-ribonuclease 3 (135 aa).

D17 is a catalytic residue.

Belongs to the MrnC RNase family. As to quaternary structure, homodimer. The cofactor is Mg(2+).

The protein localises to the cytoplasm. In terms of biological role, involved in correct processing of both the 5' and 3' ends of 23S rRNA precursor. Processes 30S rRNA precursor transcript even in absence of ribonuclease 3 (Rnc); Rnc processes 30S rRNA into smaller rRNA precursors. The polypeptide is Mini-ribonuclease 3 (Bacillus cereus (strain ATCC 14579 / DSM 31 / CCUG 7414 / JCM 2152 / NBRC 15305 / NCIMB 9373 / NCTC 2599 / NRRL B-3711)).